The following is a 285-amino-acid chain: Polyamine aminopropyltransferase (285 aa).

Positions 5–241 (DNWYIEHFQP…GWWSVTMASK (237 aa)) constitute a PABS domain. An S-methyl-5'-thioadenosine-binding site is contributed by Gln35. Spermidine contacts are provided by His66 and Asp90. S-methyl-5'-thioadenosine contacts are provided by residues Asp110 and 141–142 (DG). The Proton acceptor role is filled by Asp160. 160–163 (DSTD) is a spermidine binding site. Pro167 is a binding site for S-methyl-5'-thioadenosine.

It belongs to the spermidine/spermine synthase family. In terms of assembly, homodimer or homotetramer.

It localises to the cytoplasm. It catalyses the reaction S-adenosyl 3-(methylsulfanyl)propylamine + putrescine = S-methyl-5'-thioadenosine + spermidine + H(+). The protein operates within amine and polyamine biosynthesis; spermidine biosynthesis; spermidine from putrescine: step 1/1. Its function is as follows. Catalyzes the irreversible transfer of a propylamine group from the amino donor S-adenosylmethioninamine (decarboxy-AdoMet) to putrescine (1,4-diaminobutane) to yield spermidine. The protein is Polyamine aminopropyltransferase of Xanthomonas oryzae pv. oryzae (strain MAFF 311018).